The chain runs to 545 residues: Chaperonin GroEL (545 aa).

ATP-binding positions include 29-32 (TLGP), Lys50, 86-90 (DGTTT), Gly413, and Asp495.

It belongs to the chaperonin (HSP60) family. In terms of assembly, forms a cylinder of 14 subunits composed of two heptameric rings stacked back-to-back. Interacts with the co-chaperonin GroES.

The protein localises to the cytoplasm. The enzyme catalyses ATP + H2O + a folded polypeptide = ADP + phosphate + an unfolded polypeptide.. Its function is as follows. Together with its co-chaperonin GroES, plays an essential role in assisting protein folding. The GroEL-GroES system forms a nano-cage that allows encapsulation of the non-native substrate proteins and provides a physical environment optimized to promote and accelerate protein folding. The sequence is that of Chaperonin GroEL from Borreliella afzelii (strain PKo) (Borrelia afzelii).